The primary structure comprises 229 residues: Clathrin light chain B (229 aa).

Low complexity-rich tracts occupy residues 1–17 (MAED…GAPE) and 45–58 (GAPA…AQPG). The segment at 1–80 (MAEDFGFFSS…TVNGDVFQEA (80 aa)) is disordered. Residues serine 11 and serine 13 each carry the phosphoserine modification. Residues 93–155 (ADRLTQEPES…QVEKNKINNR (63 aa)) are involved in binding clathrin heavy chain. Threonine 187 bears the Phosphothreonine mark. Cysteine 199 and cysteine 209 are joined by a disulfide. N6-acetyllysine is present on lysine 204. A Phosphoserine modification is found at serine 217.

It belongs to the clathrin light chain family. Clathrin coats are formed from molecules containing 3 heavy chains and 3 light chains. Interacts (via N-terminus) with HIP1. Interacts with HIP1R.

The protein resides in the cytoplasmic vesicle membrane. It localises to the membrane. The protein localises to the coated pit. Functionally, clathrin is the major protein of the polyhedral coat of coated pits and vesicles. In Rattus norvegicus (Rat), this protein is Clathrin light chain B (Cltb).